The chain runs to 179 residues: Large ribosomal subunit protein uL5 (179 aa).

The protein belongs to the universal ribosomal protein uL5 family. As to quaternary structure, part of the 50S ribosomal subunit; part of the 5S rRNA/L5/L18/L25 subcomplex. Contacts the 5S rRNA and the P site tRNA. Forms a bridge to the 30S subunit in the 70S ribosome.

Its function is as follows. This is one of the proteins that bind and probably mediate the attachment of the 5S RNA into the large ribosomal subunit, where it forms part of the central protuberance. In the 70S ribosome it contacts protein S13 of the 30S subunit (bridge B1b), connecting the 2 subunits; this bridge is implicated in subunit movement. Contacts the P site tRNA; the 5S rRNA and some of its associated proteins might help stabilize positioning of ribosome-bound tRNAs. In Pseudomonas entomophila (strain L48), this protein is Large ribosomal subunit protein uL5.